The following is a 743-amino-acid chain: Alpha-N-acetylglucosaminidase (743 aa).

The N-terminal stretch at 1–23 (MEAVAVAAAVGVLLLAGAGGAAG) is a signal peptide. Asparagine 261, asparagine 272, asparagine 435, asparagine 503, asparagine 526, and asparagine 532 each carry an N-linked (GlcNAc...) asparagine glycan.

The protein belongs to the glycosyl hydrolase 89 family. In terms of assembly, monomer and homodimer. Liver, ovary, peripheral blood leukocytes, testis, prostate, spleen, colon, lung, placenta and kidney.

Its subcellular location is the lysosome. The catalysed reaction is Hydrolysis of terminal non-reducing N-acetyl-D-glucosamine residues in N-acetyl-alpha-D-glucosaminides.. Its function is as follows. Involved in the degradation of heparan sulfate. This chain is Alpha-N-acetylglucosaminidase (NAGLU), found in Homo sapiens (Human).